A 253-amino-acid polypeptide reads, in one-letter code: Chloride intracellular channel protein 4 (253 aa).

Ala2 bears the N-acetylalanine mark. The required for insertion into the membrane stretch occupies residues 2-101 (ALSMPLNGLK…EEFLEEVLCP (100 aa)). Ser4 is modified (phosphoserine). Lys24 carries the post-translational modification N6-acetyllysine. The G-site signature appears at 35 to 38 (CPFS). A helical membrane pass occupies residues 37–57 (FSQRLFMILWLKGVVFSVTTV). Residues 81 to 244 (NSEVKTDVNK…PSDKEVEIAY (164 aa)) enclose the GST C-terminal domain. Residue Lys130 is modified to N6-acetyllysine. Phosphoserine is present on residues Ser132, Ser167, and Ser236. Position 244 is a phosphotyrosine (Tyr244).

This sequence belongs to the chloride channel CLIC family. Monomer. Interacts with HRH30. Interacts with AKAP9. Detected in blood vessels in the retina (at protein level). Expressed to the greatest extent in vivo in heart, lung, liver, kidney, and skin.

It localises to the cytoplasm. Its subcellular location is the cytoskeleton. It is found in the microtubule organizing center. The protein localises to the centrosome. The protein resides in the cytoplasmic vesicle membrane. It localises to the nucleus. Its subcellular location is the cell membrane. It is found in the mitochondrion. The protein localises to the cell junction. The catalysed reaction is chloride(in) = chloride(out). It carries out the reaction thiocyanate(in) = thiocyanate(out). The enzyme catalyses nitrate(in) = nitrate(out). It catalyses the reaction iodide(out) = iodide(in). The catalysed reaction is bromide(in) = bromide(out). It carries out the reaction fluoride(in) = fluoride(out). The enzyme catalyses choline(out) = choline(in). Functionally, in the soluble state, catalyzes glutaredoxin-like thiol disulfide exchange reactions with reduced glutathione as electron donor. Can insert into membranes and form voltage-dependent multi-ion conductive channels. Membrane insertion seems to be redox-regulated and may occur only under oxidizing conditions. Has alternate cellular functions like a potential role in angiogenesis or in maintaining apical-basolateral membrane polarity during mitosis and cytokinesis. Could also promote endothelial cell proliferation and regulate endothelial morphogenesis (tubulogenesis). Promotes cell-surface expression of HRH3. This chain is Chloride intracellular channel protein 4 (Clic4), found in Mus musculus (Mouse).